The chain runs to 275 residues: Shikimate dehydrogenase (NADP(+)) (275 aa).

Shikimate is bound by residues 19-21 and T66; that span reads SIS. Residue K70 is the Proton acceptor of the active site. E82 provides a ligand contact to NADP(+). The shikimate site is built by N91 and D106. NADP(+)-binding positions include 129 to 133, 153 to 158, and I219; these read GAGGA and NRTYER. Y221 lines the shikimate pocket. G242 contributes to the NADP(+) binding site.

The protein belongs to the shikimate dehydrogenase family. As to quaternary structure, homodimer.

It catalyses the reaction shikimate + NADP(+) = 3-dehydroshikimate + NADPH + H(+). Its pathway is metabolic intermediate biosynthesis; chorismate biosynthesis; chorismate from D-erythrose 4-phosphate and phosphoenolpyruvate: step 4/7. In terms of biological role, involved in the biosynthesis of the chorismate, which leads to the biosynthesis of aromatic amino acids. Catalyzes the reversible NADPH linked reduction of 3-dehydroshikimate (DHSA) to yield shikimate (SA). The chain is Shikimate dehydrogenase (NADP(+)) from Dictyoglomus turgidum (strain DSM 6724 / Z-1310).